The primary structure comprises 138 residues: Small ribosomal subunit protein uS11c (138 aa).

The tract at residues 1–24 (MTKPIPRIGSRKNGRISSRKNGRR) is disordered. A compositionally biased stretch (basic residues) spans 9 to 24 (GSRKNGRISSRKNGRR).

It belongs to the universal ribosomal protein uS11 family. Part of the 30S ribosomal subunit.

The protein localises to the plastid. Its subcellular location is the chloroplast. The sequence is that of Small ribosomal subunit protein uS11c from Chloranthus spicatus (Chulantree).